Reading from the N-terminus, the 428-residue chain is Light-independent protochlorophyllide reductase subunit N (428 aa).

Positions 16, 41, and 102 each coordinate [4Fe-4S] cluster.

It belongs to the BchN/ChlN family. As to quaternary structure, protochlorophyllide reductase is composed of three subunits; ChlL, ChlN and ChlB. Forms a heterotetramer of two ChlB and two ChlN subunits. The cofactor is [4Fe-4S] cluster.

It carries out the reaction chlorophyllide a + oxidized 2[4Fe-4S]-[ferredoxin] + 2 ADP + 2 phosphate = protochlorophyllide a + reduced 2[4Fe-4S]-[ferredoxin] + 2 ATP + 2 H2O. It participates in porphyrin-containing compound metabolism; chlorophyll biosynthesis (light-independent). Its function is as follows. Component of the dark-operative protochlorophyllide reductase (DPOR) that uses Mg-ATP and reduced ferredoxin to reduce ring D of protochlorophyllide (Pchlide) to form chlorophyllide a (Chlide). This reaction is light-independent. The NB-protein (ChlN-ChlB) is the catalytic component of the complex. This is Light-independent protochlorophyllide reductase subunit N from Synechococcus sp. (strain CC9311).